Consider the following 326-residue polypeptide: tRNA-dihydrouridine(20/20a) synthase (326 aa).

FMN-binding positions include 11–13 and Q63; that span reads PML. Residue C93 is the Proton donor of the active site. Residues K132, H165, 205-207, and 227-228 each bind FMN; these read NGG and GR.

It belongs to the Dus family. DusA subfamily. The cofactor is FMN.

The enzyme catalyses 5,6-dihydrouridine(20) in tRNA + NADP(+) = uridine(20) in tRNA + NADPH + H(+). It carries out the reaction 5,6-dihydrouridine(20) in tRNA + NAD(+) = uridine(20) in tRNA + NADH + H(+). The catalysed reaction is 5,6-dihydrouridine(20a) in tRNA + NADP(+) = uridine(20a) in tRNA + NADPH + H(+). It catalyses the reaction 5,6-dihydrouridine(20a) in tRNA + NAD(+) = uridine(20a) in tRNA + NADH + H(+). Its function is as follows. Catalyzes the synthesis of 5,6-dihydrouridine (D), a modified base found in the D-loop of most tRNAs, via the reduction of the C5-C6 double bond in target uridines. Specifically modifies U20 and U20a in tRNAs. The polypeptide is tRNA-dihydrouridine(20/20a) synthase (Vibrio vulnificus (strain CMCP6)).